A 154-amino-acid polypeptide reads, in one-letter code: MATLPLPTQTSTISLPKPYLSNSFSFPLRNATLSTTTNRRNFLTTGRIIARAYKVVVEHDGKTTELEVEPDETILSKALDSGLDVPYDCNLGVCMTCPAKLVTGTVDQSGGMLSDDVVERGYTLLCASYPTSDCHIKMIPEEELLSLQLATAND.

The transit peptide at 1–56 (MATLPLPTQTSTISLPKPYLSNSFSFPLRNATLSTTTNRRNFLTTGRIIARAYKVV) directs the protein to the chloroplast. The 2Fe-2S ferredoxin-type domain maps to 57-142 (VEHDGKTTEL…DCHIKMIPEE (86 aa)). Residues Cys-89, Cys-94, Cys-97, and Cys-126 each coordinate [2Fe-2S] cluster.

This sequence belongs to the 2Fe2S plant-type ferredoxin family. [2Fe-2S] cluster serves as cofactor.

Its subcellular location is the plastid. The protein resides in the chloroplast. In terms of biological role, ferredoxins are iron-sulfur proteins that transfer electrons in a wide variety of metabolic reactions. Mediates alternative electron partitioning in conditions of acceptor limitation at photosystem I. Accepts electrons from photosystem I (PSI) and is capable of electron transfer with FNR, but cannot support photoreduction of NADP(+). This is Ferredoxin C 1, chloroplastic from Arabidopsis thaliana (Mouse-ear cress).